The chain runs to 363 residues: Ferredoxin--NADP reductase, cyanelle (363 aa).

A cyanelle-targeting transit peptide spans 1–65; sequence MAFVASVPVF…TFEVDTTIRA (65 aa). The FAD-binding FR-type domain maps to 84 to 206; that stretch reads ANPYIGKCIY…TGPVGTTMLM (123 aa). Residues 142 to 145, 163 to 165, Y169, 180 to 182, and T221 each bind FAD; these read RLYS, SVK, and VCS. Residues S145 and K165 each coordinate NADP(+). NADP(+) contacts are provided by residues T221, 253–254, 283–284, K293, 322–323, and E361; these read VP, SR, and GL.

This sequence belongs to the ferredoxin--NADP reductase type 1 family. It depends on FAD as a cofactor.

The protein localises to the plastid. Its subcellular location is the cyanelle stroma. It is found in the cyanelle thylakoid membrane. The enzyme catalyses 2 reduced [2Fe-2S]-[ferredoxin] + NADP(+) + H(+) = 2 oxidized [2Fe-2S]-[ferredoxin] + NADPH. Functionally, may play a key role in regulating the relative amounts of cyclic and non-cyclic electron flow to meet the demands of the plant for ATP and reducing power. This Cyanophora paradoxa protein is Ferredoxin--NADP reductase, cyanelle (PETH).